A 224-amino-acid polypeptide reads, in one-letter code: Ribonuclease T (224 aa).

The 175-residue stretch at 32–206 (VVVDVETGGF…YDTEKTAELF (175 aa)) folds into the Exonuclease domain. The Mg(2+) site is built by Asp35, Glu37, His193, and Asp198. Catalysis depends on His193, which acts as the Proton donor/acceptor.

The protein belongs to the RNase T family. Homodimer. Mg(2+) serves as cofactor.

Its function is as follows. Trims short 3' overhangs of a variety of RNA species, leaving a one or two nucleotide 3' overhang. Responsible for the end-turnover of tRNA: specifically removes the terminal AMP residue from uncharged tRNA (tRNA-C-C-A). Also appears to be involved in tRNA biosynthesis. This chain is Ribonuclease T, found in Pseudomonas aeruginosa (strain UCBPP-PA14).